Here is a 472-residue protein sequence, read N- to C-terminus: Ulvan lyase (472 aa).

A signal peptide spans 1–21 (MIIKQYLLKISLCVLLLGCDS). Substrate-binding residues include N46 and N109. H110 serves as the catalytic Proton donor. Substrate is bound by residues K112 and H130. Catalysis depends on Y175, which acts as the Proton acceptor. Substrate is bound by residues R191, H195, and Y233. A Zn(2+)-binding site is contributed by H195. Zn(2+) contacts are provided by H251, C253, and H265. H265 lines the substrate pocket.

The protein belongs to the polysaccharide lyase 25 family.

Ulvan lyase involved in ulvan degradation. Ulvan is the main polysaccharide component of the Ulvales (green seaweed) cell wall. It is composed of disaccharide building blocks comprising 3-sulfated rhamnose (Rha3S) linked to D-glucuronic acid (GlcA), L-iduronic acid (IduA), or D-xylose (Xyl). Ulvan lyase catalyzes the endolytic cleavage of the glycosidic bond between Rha3S and the uronic acids GlcA or IduA, producing oligosaccharides that have unsaturated 4-deoxy-L-threo-hex-4-enopyranosiduronic acid (deltaUA) at the non-reducing end. This results eventually in the degradation of the ulvan polysaccharide into deltaUA-Rha3S disaccharides and deltaUA-Rha3S-Xyl-Rha3S tetrasaccharides. The sequence is that of Ulvan lyase from Nonlabens ulvanivorans (Persicivirga ulvanivorans).